The chain runs to 364 residues: Variable large protein 21 (364 aa).

The first 26 residues, 1–26, serve as a signal peptide directing secretion; sequence MRKRISAIINKLNISIMMMIVVLMIG. Residue Cys27 is the site of N-palmitoyl cysteine attachment. The S-diacylglycerol cysteine moiety is linked to residue Cys27.

It belongs to the variable large protein (Vlp) family. Alpha subfamily.

The protein resides in the cell outer membrane. Functionally, the Vlp and Vsp proteins are antigenically distinct proteins, only one vlp or vsp gene is transcriptionally active at any one time. Switching between these genes is a mechanism of host immune response evasion. This is Variable large protein 21 from Borrelia hermsii.